A 316-amino-acid polypeptide reads, in one-letter code: uncharacterized protein (316 aa).

4 helical membrane-spanning segments follow: residues 74 to 94, 99 to 119, 166 to 186, and 188 to 208; these read IPVL…GMAI, WPYA…IFLG, MAGC…TVLG, and VEGF…GYIF.

It localises to the cell membrane. This is an uncharacterized protein from Synechocystis sp. (strain ATCC 27184 / PCC 6803 / Kazusa).